We begin with the raw amino-acid sequence, 655 residues long: SRSF protein kinase 1 (655 aa).

The tract at residues 1–57 (MERKVLALQARKKRTKAKKDKAQRKPETQHRGSAPHSESDLPEQEEEILGSDDDEQE) is disordered. Positions 10-22 (ARKKRTKAKKDKA) are enriched in basic residues. The span at 40-57 (DLPEQEEEILGSDDDEQE) shows a compositional bias: acidic residues. Ser51 carries the phosphoserine; by CK2 modification. Residues 80–653 (YHVIRKLGWG…AAECLRHPWL (574 aa)) form the Protein kinase domain. ATP contacts are provided by residues 86–94 (LGWGHFSTV) and Lys109. Catalysis depends on Asp213, which acts as the Proton acceptor. Disordered regions lie at residues 238-341 (WQRS…QDQT) and 397-417 (FLSSQNGDSSTSQETDSCTPI). Residues 265 to 276 (KNKKKKLKKKQK) are compositionally biased toward basic residues. 2 stretches are compositionally biased toward basic and acidic residues: residues 277–288 (RQAELLEKRMQE) and 304–318 (NKQEESESPVERPLK). A phosphoserine mark is found at Ser309, Ser311, and Ser333. Residue Ser555 is modified to Phosphoserine; by CK2.

Belongs to the protein kinase superfamily. CMGC Ser/Thr protein kinase family. In terms of assembly, monomer. Found in a multisubunit complex containing seven proteins, named toposome, which separates entangled circular chromatin DNA during chromosome segregation. Interacts with HHV-1 ICP27 protein. Interacts with DNAJC8 and AHSA1/AHA1 and this mediates formation of a complex with the Hsp70 /Hsp90 machinery. Binds to IGF2BP1, SYNCRIP, HNRNPA2B1 and HNRNPC. Interacts with SAFB/SAFB1 and SAFB2 which inhibits its activity. Mg(2+) is required as a cofactor.

It localises to the cytoplasm. The protein localises to the nucleus. The protein resides in the nucleoplasm. Its subcellular location is the nucleus matrix. It is found in the microsome. It localises to the nucleus speckle. The protein localises to the chromosome. The catalysed reaction is L-seryl-[protein] + ATP = O-phospho-L-seryl-[protein] + ADP + H(+). It catalyses the reaction L-threonyl-[protein] + ATP = O-phospho-L-threonyl-[protein] + ADP + H(+). Activated by phosphorylation on Ser-51 and Ser-555. In terms of biological role, serine/arginine-rich protein-specific kinase which specifically phosphorylates its substrates at serine residues located in regions rich in arginine/serine dipeptides, known as RS domains and is involved in the phosphorylation of SR splicing factors and the regulation of splicing. Plays a central role in the regulatory network for splicing, controlling the intranuclear distribution of splicing factors in interphase cells and the reorganization of nuclear speckles during mitosis. Can influence additional steps of mRNA maturation, as well as other cellular activities, such as chromatin reorganization in somatic and sperm cells and cell cycle progression. Phosphorylates SFRS2, ZRSR2, LBR and PRM1. Phosphorylates SRSF1 using a directional (C-terminal to N-terminal) and a dual-track mechanism incorporating both processive phosphorylation (in which the kinase stays attached to the substrate after each round of phosphorylation) and distributive phosphorylation steps (in which the kinase and substrate dissociate after each phosphorylation event). The RS domain of SRSF1 binds first to a docking groove in the large lobe of the kinase domain of SRPK1. This induces certain structural changes in SRPK1 and/or RRM2 domain of SRSF1, allowing RRM2 to bind the kinase and initiate phosphorylation. The cycles continue for several phosphorylation steps in a processive manner (steps 1-8) until the last few phosphorylation steps (approximately steps 9-12). During that time, a mechanical stress induces the unfolding of the beta-4 motif in RRM2, which then docks at the docking groove of SRPK1. This also signals RRM2 to begin to dissociate, which facilitates SRSF1 dissociation after phosphorylation is completed. Can mediate hepatitis B virus (HBV) core protein phosphorylation. It plays a negative role in the regulation of HBV replication through a mechanism not involving the phosphorylation of the core protein but by reducing the packaging efficiency of the pregenomic RNA (pgRNA) without affecting the formation of the viral core particles. Can induce splicing of exon 10 in MAPT/TAU. The chain is SRSF protein kinase 1 from Pongo abelii (Sumatran orangutan).